Here is a 116-residue protein sequence, read N- to C-terminus: Ribosome-binding factor A (116 aa).

This sequence belongs to the RbfA family. Monomer. Binds 30S ribosomal subunits, but not 50S ribosomal subunits or 70S ribosomes.

It localises to the cytoplasm. Functionally, one of several proteins that assist in the late maturation steps of the functional core of the 30S ribosomal subunit. Associates with free 30S ribosomal subunits (but not with 30S subunits that are part of 70S ribosomes or polysomes). Required for efficient processing of 16S rRNA. May interact with the 5'-terminal helix region of 16S rRNA. In Streptococcus pyogenes serotype M5 (strain Manfredo), this protein is Ribosome-binding factor A.